Reading from the N-terminus, the 476-residue chain is Protein transport protein Sec61 subunit alpha (476 aa).

Over 2–33 (GIKFLEFIKPFCAVLPEIQKPERKIQFREKVL) the chain is Cytoplasmic. Residues 34–53 (WTAITLFIFLVCCQIPLFGI) traverse the membrane as a helical segment. Topologically, residues 54-76 (MSSDSADPFYWMRVILASNRGTL) are lumenal. A helical transmembrane segment spans residues 77–96 (MELGIAPIVTSGLIMQLLAG). Residues 97–117 (AKIIEVGDTPKDRALFNGAQK) lie on the Cytoplasmic side of the membrane. A helical transmembrane segment spans residues 118-138 (LFGMIITIGQAIVYVMTGMYG). Residues 139 to 144 (DPSEMG) are Lumenal-facing. Residues 145-165 (AGICLLIIIQLFVAGLIVLLL) form a helical membrane-spanning segment. Residues 166-172 (DELLQKG) lie on the Cytoplasmic side of the membrane. A helical membrane pass occupies residues 173 to 193 (YGLGSGISLFIATNICETIVW). At 194–240 (KAFGPTTVNTGRGTEFEGAIIALFHLLATRTDKVRALREAFYRQNLP) the chain is on the lumenal side. Residues 241-261 (NLMNLIATVFVFAVVIYFQGF) form a helical membrane-spanning segment. The Cytoplasmic portion of the chain corresponds to 262-288 (RVDLPIKSARYRGQYNTYPIKLFYTSN). Residues 289-309 (IPIILQSALVSNLYVISQMLS) form a helical membrane-spanning segment. At 310-354 (TRFSGNFLVNLLGTWSDATTSGPARAYPVAGLCYYLSPPESFGSV) the chain is on the lumenal side. A helical transmembrane segment spans residues 355–375 (LDDPVHAVIYIVFMLGSCAFF). Over 376 to 420 (SKTWIEVSGSSAKDVAKQLKEQQMVMRGHRETSMVHELNRYIPTA) the chain is Cytoplasmic. The helical transmembrane segment at 421–441 (AAFGGLCIGGLSVMADFLGAI) threads the bilayer. Residues 442-445 (GSGT) lie on the Lumenal side of the membrane. A helical membrane pass occupies residues 446–462 (GILLAVTIIYQYFEIFV). The Cytoplasmic segment spans residues 463-476 (KEQSEVGSMGALLF).

The protein belongs to the SecY/SEC61-alpha family. In terms of assembly, the SEC61 channel-forming translocon complex consists of channel-forming core components SEC61A1, SEC61B and SEC61G and different auxiliary components such as SEC62 and SEC63. The SEC61 channel associates with the multi-pass translocon (MPT) complex.

The protein localises to the endoplasmic reticulum membrane. Component of SEC61 channel-forming translocon complex that mediates transport of signal peptide-containing precursor polypeptides across the endoplasmic reticulum (ER). Forms a ribosome receptor and a gated pore in the ER membrane, both functions required for cotranslational translocation of nascent polypeptides. May cooperate with auxiliary protein SEC62, SEC63 and HSPA5/BiP to enable post-translational transport of small presecretory proteins. The SEC61 channel is also involved in ER membrane insertion of transmembrane proteins: it mediates membrane insertion of the first few transmembrane segments of proteins, while insertion of subsequent transmembrane regions of multi-pass membrane proteins is mediated by the multi-pass translocon (MPT) complex. The chain is Protein transport protein Sec61 subunit alpha (sec61a) from Bovichtus variegatus (Thornfish).